We begin with the raw amino-acid sequence, 83 residues long: BmKBT-like peptide (83 aa).

Positions 1-19 (MKAALLLVISTLMLIGVLT) are cleaved as a signal peptide. One can recognise an LCN-type CS-alpha/beta domain in the interval 21 to 81 (KSGYPIQHDG…TWSRETNKCR (61 aa)). Disulfide bonds link C31–C80, C35–C54, C41–C61, and C45–C63. Position 83 (K83) is a propeptide, removed by a carboxypeptidase.

This sequence belongs to the long (4 C-C) scorpion toxin superfamily. Sodium channel inhibitor family. Beta subfamily. Expressed by the venom gland.

Its subcellular location is the secreted. Functionally, sodium channel inhibitor. Possesses potent toxicity in mice but induces only paralysis in cotton bollworm. The chain is BmKBT-like peptide from Olivierus martensii (Manchurian scorpion).